Reading from the N-terminus, the 356-residue chain is Manganese-dependent ADP-ribose/CDP-alcohol diphosphatase (356 aa).

Zn(2+) is bound by residues Asp-32, Gln-34, Asp-81, Asn-117, His-253, His-290, and His-292.

It belongs to the ADPRibase-Mn family. Monomer. Requires Mg(2+) as cofactor.

The enzyme catalyses CDP-choline + H2O = phosphocholine + CMP + 2 H(+). It catalyses the reaction ADP-D-ribose + H2O = D-ribose 5-phosphate + AMP + 2 H(+). It carries out the reaction CDP-glycerol + H2O = sn-glycerol 3-phosphate + CMP + 2 H(+). In terms of biological role, hydrolyzes ADP-ribose, IDP-ribose, CDP-glycerol, CDP-choline and CDP-ethanolamine, but not other non-reducing ADP-sugars or CDP-glucose. This chain is Manganese-dependent ADP-ribose/CDP-alcohol diphosphatase (adprm), found in Xenopus laevis (African clawed frog).